A 585-amino-acid polypeptide reads, in one-letter code: Serine/threonine-protein kinase Nek3 (585 aa).

Residues 4–258 enclose the Protein kinase domain; that stretch reads YEVLEQIGKG…AAELLKHPHL (255 aa). ATP is bound by residues 10–18 and Lys-33; that span reads IGKGSFGSA. Catalysis depends on Asp-129, which acts as the Proton acceptor. 2 disordered regions span residues 354 to 413 and 489 to 511; these read GNHS…TPVN and DSSK…SNPL. Composition is skewed to polar residues over residues 400-413 and 498-511; these read RASQ…TPVN and SSDP…SNPL.

This sequence belongs to the protein kinase superfamily. NEK Ser/Thr protein kinase family. NIMA subfamily. In terms of assembly, interacts with PLIM2B. As to expression, expressed in pollen grains.

It catalyses the reaction L-seryl-[protein] + ATP = O-phospho-L-seryl-[protein] + ADP + H(+). The catalysed reaction is L-threonyl-[protein] + ATP = O-phospho-L-threonyl-[protein] + ADP + H(+). Its function is as follows. May be involved in plant development processes. May function downstream of DCW11 in retrograde signaling from the mitochondria to the nucleus. Seems to be involved in the mechanism of cytoplasmic male sterility (CMS) occurrence. In Oryza sativa subsp. japonica (Rice), this protein is Serine/threonine-protein kinase Nek3.